Here is a 374-residue protein sequence, read N- to C-terminus: 8-amino-7-oxononanoate synthase (374 aa).

Residues Arg-22 and Arg-29 each coordinate substrate. 109–110 serves as a coordination point for pyridoxal 5'-phosphate; that stretch reads GY. Residue His-134 coordinates substrate. Pyridoxal 5'-phosphate contacts are provided by residues Ser-182, 207–210, and 227–230; these read DDAH and TLSK. N6-(pyridoxal phosphate)lysine is present on Lys-230. A substrate-binding site is contributed by Thr-339.

The protein belongs to the class-II pyridoxal-phosphate-dependent aminotransferase family. BioF subfamily. As to quaternary structure, homodimer. Requires pyridoxal 5'-phosphate as cofactor.

It carries out the reaction 6-carboxyhexanoyl-[ACP] + L-alanine + H(+) = (8S)-8-amino-7-oxononanoate + holo-[ACP] + CO2. The protein operates within cofactor biosynthesis; biotin biosynthesis. Catalyzes the decarboxylative condensation of pimeloyl-[acyl-carrier protein] and L-alanine to produce 8-amino-7-oxononanoate (AON), [acyl-carrier protein], and carbon dioxide. The chain is 8-amino-7-oxononanoate synthase from Methylobacterium radiotolerans (strain ATCC 27329 / DSM 1819 / JCM 2831 / NBRC 15690 / NCIMB 10815 / 0-1).